The sequence spans 72 residues: MAEVLDLEIDPISDGEDDTYSSELDDDLKDSIEQLERVLCLVVFPLLGKFLGRKFAFHAWARWLERRRLVSN.

A disordered region spans residues 1 to 22; sequence MAEVLDLEIDPISDGEDDTYSS. Over 1–34 the chain is Cytoplasmic; sequence MAEVLDLEIDPISDGEDDTYSSELDDDLKDSIEQ. Residues 35 to 52 traverse the membrane as a helical segment; sequence LERVLCLVVFPLLGKFLG. Topologically, residues 53–72 are mitochondrial intermembrane; the sequence is RKFAFHAWARWLERRRLVSN.

This sequence belongs to the MIM2 family. As to quaternary structure, component of the mitochondrial outer import machinery (MIM) complex containing at least mim1 and mim2. Interacts with mim1. Interacts with mitophagy receptor atg43.

It localises to the mitochondrion outer membrane. Functionally, component of the mitochondrial outer import machinery (MIM) complex that mediates transport of proteins into mitochondrial compartments. Promotes the insertion of tom70 into the outer mitochondrial membrane. Promotes the insertion of atg43 into the outer mitochondrial membrane. Involved in import of the subset of proteins with multiple alpha-helical transmembrane segments. The polypeptide is Mitochondrial import protein 2 (Schizosaccharomyces pombe (strain 972 / ATCC 24843) (Fission yeast)).